Consider the following 911-residue polypeptide: Desmoglein-1-gamma (911 aa).

The N-terminal stretch at 1–23 (MDWHSFRIAALLLTSLVVLEVNS) is a signal peptide. A propeptide spanning residues 24–49 (EFQIQVRDHNAKNGTIKWHSIRRQKR) is cleaved from the precursor. Cadherin domains lie at 50-157 (EWIK…PPVF), 158-269 (SMTT…IPYL), and 270-389 (EQSS…QPGS). Residues 50–519 (EWIKFAAACR…PNVDNVHFGP (470 aa)) lie on the Extracellular side of the membrane. Residue Asn-110 is glycosylated (N-linked (GlcNAc...) (high mannose) asparagine). Asn-180 carries an N-linked (GlcNAc...) asparagine glycan. An N-linked (GlcNAc...) asparagine glycan is attached at Asn-401. A helical membrane pass occupies residues 520–540 (AGIGLLIMGFLVLGLVPFLLI). The Cytoplasmic portion of the chain corresponds to 541 to 911 (SCDCGGAPGG…GMIGNLSIPP (371 aa)). Desmoglein repeat repeat units lie at residues 783–809 (AYPS…TVRE), 810–839 (SYTT…ERVV), 840–869 (GPIS…ERVI), and 870–897 (APGS…ERVI). A Desmoglein repeat 5; truncated repeat occupies 898-911 (QPTSGMIGNLSIPP).

In terms of assembly, interacts with DSC3; there is evidence to suggest that the interaction promotes cell-cell adhesion of keratinocytes. As to expression, expressed in epidermis, brain, liver, skeletal, muscle and testis.

The protein resides in the cell membrane. The protein localises to the cell junction. Its subcellular location is the desmosome. It is found in the cytoplasm. It localises to the nucleus. Functionally, component of intercellular desmosome junctions. Involved in the interaction of plaque proteins and intermediate filaments mediating cell-cell adhesion. This chain is Desmoglein-1-gamma (Dsg1c), found in Mus musculus (Mouse).